The chain runs to 261 residues: Cytosolic Fe-S cluster assembly factor Nubp2 homolog (261 aa).

Residue 14–21 (GKGGVGKS) coordinates ATP. Residues C188 and C191 each contribute to the [4Fe-4S] cluster site.

It belongs to the Mrp/NBP35 ATP-binding proteins family. NUBP2/CFD1 subfamily. As to quaternary structure, heterotetramer of 2 Nubp1 and 2 Nubp2 chains. [4Fe-4S] cluster is required as a cofactor.

It localises to the cytoplasm. Component of the cytosolic iron-sulfur (Fe/S) protein assembly (CIA) machinery. Required for maturation of extramitochondrial Fe-S proteins. The Nubp1-Nubp2 heterotetramer forms a Fe-S scaffold complex, mediating the de novo assembly of an Fe-S cluster and its transfer to target apoproteins. The protein is Cytosolic Fe-S cluster assembly factor Nubp2 homolog of Drosophila ananassae (Fruit fly).